A 492-amino-acid chain; its full sequence is 2,3-bisphosphoglycerate-independent phosphoglycerate mutase (492 aa).

Mn(2+) contacts are provided by D11 and S61. S61 functions as the Phosphoserine intermediate in the catalytic mechanism. Substrate contacts are provided by residues H118, R147–D148, R177, R183, R248–R251, and K321. Residues D387, H391, D428, H429, and H446 each coordinate Mn(2+).

It belongs to the BPG-independent phosphoglycerate mutase family. As to quaternary structure, monomer. The cofactor is Mn(2+).

The enzyme catalyses (2R)-2-phosphoglycerate = (2R)-3-phosphoglycerate. The protein operates within carbohydrate degradation; glycolysis; pyruvate from D-glyceraldehyde 3-phosphate: step 3/5. In terms of biological role, catalyzes the interconversion of 2-phosphoglycerate and 3-phosphoglycerate. The chain is 2,3-bisphosphoglycerate-independent phosphoglycerate mutase from Helicobacter acinonychis (strain Sheeba).